A 239-amino-acid chain; its full sequence is Sugar fermentation stimulation protein homolog (239 aa).

The protein belongs to the SfsA family.

This is Sugar fermentation stimulation protein homolog from Synechococcus sp. (strain JA-2-3B'a(2-13)) (Cyanobacteria bacterium Yellowstone B-Prime).